We begin with the raw amino-acid sequence, 257 residues long: MALPDFTMHQLLEAGVHFGHQTHRWNPKMTPYIYGQRNNIHIIDLAQTVPLLHQALKLVSDTVARGGRILFVGTKRQASDIIADAANRSAQYYVNARWLGGMLTNWKTISNSIQRLRKLDKILAAEAQGFTKKERLNLERDREKLNRALGGIKDMGSVPDLIFIIDTNKENIAIQEAKRLGIPVIAIIDTNCDPDNVDHPIPGNDDASRAISLYCDLFARAALDGIARQQGAMGIDLGAQADAPVDPVLENTAPVSE.

It belongs to the universal ribosomal protein uS2 family.

This chain is Small ribosomal subunit protein uS2, found in Bartonella henselae (strain ATCC 49882 / DSM 28221 / CCUG 30454 / Houston 1) (Rochalimaea henselae).